Here is a 228-residue protein sequence, read N- to C-terminus: ATP synthase subunit beta, mitochondrial (228 aa).

The transit peptide at 1 to 31 directs the protein to the mitochondrion; sequence MFALRAAAKADKNLLPFLGQLSRSHAAKAAK. 183 to 190 is an ATP binding site; sequence GGAGVGKT.

Belongs to the ATPase alpha/beta chains family. As to quaternary structure, F-type ATPases have 2 components, CF(1) - the catalytic core - and CF(0) - the membrane proton channel. CF(1) has five subunits: alpha(3), beta(3), gamma(1), delta(1), epsilon(1). CF(0) has three main subunits: a, b and c.

The protein resides in the mitochondrion. The protein localises to the mitochondrion inner membrane. It catalyses the reaction ATP + H2O + 4 H(+)(in) = ADP + phosphate + 5 H(+)(out). Functionally, mitochondrial membrane ATP synthase (F(1)F(0) ATP synthase or Complex V) produces ATP from ADP in the presence of a proton gradient across the membrane which is generated by electron transport complexes of the respiratory chain. F-type ATPases consist of two structural domains, F(1) - containing the extramembraneous catalytic core, and F(0) - containing the membrane proton channel, linked together by a central stalk and a peripheral stalk. During catalysis, ATP synthesis in the catalytic domain of F(1) is coupled via a rotary mechanism of the central stalk subunits to proton translocation. Subunits alpha and beta form the catalytic core in F(1). Rotation of the central stalk against the surrounding alpha(3)beta(3) subunits leads to hydrolysis of ATP in three separate catalytic sites on the beta subunits. The protein is ATP synthase subunit beta, mitochondrial of Drosophila virilis (Fruit fly).